We begin with the raw amino-acid sequence, 484 residues long: tRNA-2-methylthio-N(6)-dimethylallyladenosine synthase (484 aa).

Positions 36 to 153 (GKLYIKTHGC…LPELIRARRE (118 aa)) constitute an MTTase N-terminal domain. [4Fe-4S] cluster is bound by residues C45, C82, C116, C190, C194, and C197. The Radical SAM core domain maps to 176–415 (RAEGPSAFVS…HISAHAASIS (240 aa)). The TRAM domain occupies 416-479 (QSMVGSVQRV…SNSLRGRIQL (64 aa)). The disordered stretch occupies residues 428-450 (EGPSRRDPNELTGKSENMRPVNF).

The protein belongs to the methylthiotransferase family. MiaB subfamily. Monomer. Requires [4Fe-4S] cluster as cofactor.

The protein localises to the cytoplasm. It catalyses the reaction N(6)-dimethylallyladenosine(37) in tRNA + (sulfur carrier)-SH + AH2 + 2 S-adenosyl-L-methionine = 2-methylsulfanyl-N(6)-dimethylallyladenosine(37) in tRNA + (sulfur carrier)-H + 5'-deoxyadenosine + L-methionine + A + S-adenosyl-L-homocysteine + 2 H(+). Functionally, catalyzes the methylthiolation of N6-(dimethylallyl)adenosine (i(6)A), leading to the formation of 2-methylthio-N6-(dimethylallyl)adenosine (ms(2)i(6)A) at position 37 in tRNAs that read codons beginning with uridine. The sequence is that of tRNA-2-methylthio-N(6)-dimethylallyladenosine synthase from Xanthomonas oryzae pv. oryzae (strain KACC10331 / KXO85).